Here is a 213-residue protein sequence, read N- to C-terminus: Imidazole glycerol phosphate synthase subunit HisH 1 (213 aa).

The Glutamine amidotransferase type-1 domain maps to 3–213; that stretch reads SVSILDYGVG…LSIIQQFLQI (211 aa). The Nucleophile role is filled by C81. Catalysis depends on residues H195 and E197.

In terms of assembly, heterodimer of HisH and HisF.

The protein resides in the cytoplasm. The catalysed reaction is 5-[(5-phospho-1-deoxy-D-ribulos-1-ylimino)methylamino]-1-(5-phospho-beta-D-ribosyl)imidazole-4-carboxamide + L-glutamine = D-erythro-1-(imidazol-4-yl)glycerol 3-phosphate + 5-amino-1-(5-phospho-beta-D-ribosyl)imidazole-4-carboxamide + L-glutamate + H(+). It carries out the reaction L-glutamine + H2O = L-glutamate + NH4(+). Its pathway is amino-acid biosynthesis; L-histidine biosynthesis; L-histidine from 5-phospho-alpha-D-ribose 1-diphosphate: step 5/9. IGPS catalyzes the conversion of PRFAR and glutamine to IGP, AICAR and glutamate. The HisH subunit provides the glutamine amidotransferase activity that produces the ammonia necessary to HisF for the synthesis of IGP and AICAR. The protein is Imidazole glycerol phosphate synthase subunit HisH 1 of Legionella pneumophila (strain Lens).